The sequence spans 681 residues: Cobalamin-dependent radical SAM methyltransferase TokK (681 aa).

A B12-binding domain is found at 1–144; that stretch reads MSAELASRGR…ATRLSDHPDY (144 aa). The cob(II)alamin site is built by N18, S72, Y74, V75, H103, G126, and E127. A Radical SAM core domain is found at 192 to 417; it reads RGLRFYALWE…RMYVERPGTP (226 aa). C206 and C210 together coordinate [4Fe-4S] cluster. A 5'-deoxyadenosine-binding site is contributed by F212. C213 is a binding site for [4Fe-4S] cluster. Residues D214 and C249 each coordinate cob(II)alamin. Residues Q312, E349, and G384 each coordinate 5'-deoxyadenosine.

It belongs to the methyltransferase superfamily. The cofactor is [4Fe-4S] cluster. Cob(II)alamin is required as a cofactor.

It functions in the pathway antibiotic biosynthesis. In terms of biological role, methyltransferase involved in the biosynthesis of the beta-lactam carbapenem antibiotic asparenomycin. Catalyzes three consecutive S-adenosyl-L-methionine-dependent methylations to build out the C6-isopropyl side chain in a stereocontrolled manner. The polypeptide is Cobalamin-dependent radical SAM methyltransferase TokK (Streptomyces tokunonensis).